We begin with the raw amino-acid sequence, 326 residues long: Acetyl-coenzyme A carboxylase carboxyl transferase subunit alpha (326 aa).

In terms of domain architecture, CoA carboxyltransferase C-terminal spans 44–298 (KLETRAMQLR…KQALLDNLDE (255 aa)).

The protein belongs to the AccA family. Acetyl-CoA carboxylase is a heterohexamer composed of biotin carboxyl carrier protein (AccB), biotin carboxylase (AccC) and two subunits each of ACCase subunit alpha (AccA) and ACCase subunit beta (AccD).

The protein localises to the cytoplasm. The catalysed reaction is N(6)-carboxybiotinyl-L-lysyl-[protein] + acetyl-CoA = N(6)-biotinyl-L-lysyl-[protein] + malonyl-CoA. It participates in lipid metabolism; malonyl-CoA biosynthesis; malonyl-CoA from acetyl-CoA: step 1/1. Functionally, component of the acetyl coenzyme A carboxylase (ACC) complex. First, biotin carboxylase catalyzes the carboxylation of biotin on its carrier protein (BCCP) and then the CO(2) group is transferred by the carboxyltransferase to acetyl-CoA to form malonyl-CoA. The protein is Acetyl-coenzyme A carboxylase carboxyl transferase subunit alpha of Nostoc sp. (strain PCC 7120 / SAG 25.82 / UTEX 2576).